Reading from the N-terminus, the 323-residue chain is MKSSKTGILLANLGTPDTPSPKAISRYLKEFLSDPRVVDLPRWKWLPLLNGIILPIRSRRIAKNYGAIWTEQGSPLFAITQKQKALLTEFFQQRQQNVIIEIGMTYGNPSMQYAIDNLIEQKVDKIIVLPLYPQYSSTTTAPVFDVFAQALKRHRHIVPFEFIHSYHLDENYIEALVKSIKVRLKNDEFLLFSFHGIPKRYEQEGDFYRPQCEQTAQAVVQKLGLKKEQWRLCFQSRFGSEPWLQPYTDKFLETAAQQGITKLAVICPGFSADCLETLEEIKEENKRIFLAYGGESYHYIPALNDSPEHIACLGNLLLKRMTI.

Fe cation is bound by residues H195 and E276.

The protein belongs to the ferrochelatase family.

The protein resides in the cytoplasm. It catalyses the reaction heme b + 2 H(+) = protoporphyrin IX + Fe(2+). Its pathway is porphyrin-containing compound metabolism; protoheme biosynthesis; protoheme from protoporphyrin-IX: step 1/1. Functionally, catalyzes the ferrous insertion into protoporphyrin IX. The polypeptide is Ferrochelatase (Mannheimia succiniciproducens (strain KCTC 0769BP / MBEL55E)).